The sequence spans 125 residues: L-fucose mutarotase (125 aa).

Catalysis depends on histidine 13, which acts as the Proton donor.

Belongs to the RbsD / FucU family. FucU mutarotase subfamily.

The catalysed reaction is alpha-L-fucose = beta-L-fucose. Its activity is regulated as follows. Active toward L-galactopyranoside and D-arabinopyranoside but no D-fucopyranoside activity detected. Its function is as follows. Plays a role in the catabolism of L-fucose. Involved in the anomeric conversion of L-fucose. This Xanthomonas campestris pv. campestris (strain ATCC 33913 / DSM 3586 / NCPPB 528 / LMG 568 / P 25) protein is L-fucose mutarotase.